The chain runs to 343 residues: NADH-quinone oxidoreductase subunit H (343 aa).

A run of 8 helical transmembrane segments spans residues 5-25 (FIIE…LMAM), 76-96 (FLFV…SAVI), 119-139 (ALLY…IGGW), 158-178 (VSYE…TGTL), 190-210 (MNWN…CAFA), 243-263 (LFAE…LFFG), 284-304 (ILGF…YMWV), and 323-343 (ILIP…LLFK).

It belongs to the complex I subunit 1 family. In terms of assembly, NDH-1 is composed of 14 different subunits. Subunits NuoA, H, J, K, L, M, N constitute the membrane sector of the complex.

It localises to the cell inner membrane. The enzyme catalyses a quinone + NADH + 5 H(+)(in) = a quinol + NAD(+) + 4 H(+)(out). In terms of biological role, NDH-1 shuttles electrons from NADH, via FMN and iron-sulfur (Fe-S) centers, to quinones in the respiratory chain. The immediate electron acceptor for the enzyme in this species is believed to be ubiquinone. Couples the redox reaction to proton translocation (for every two electrons transferred, four hydrogen ions are translocated across the cytoplasmic membrane), and thus conserves the redox energy in a proton gradient. This subunit may bind ubiquinone. The polypeptide is NADH-quinone oxidoreductase subunit H (Flavobacterium psychrophilum (strain ATCC 49511 / DSM 21280 / CIP 103535 / JIP02/86)).